Reading from the N-terminus, the 395-residue chain is Elongation factor Tu (395 aa).

Residues 10 to 205 enclose the tr-type G domain; it reads KPHVNIGTIG…VDSYIPLPPR (196 aa). Positions 19–26 are G1; it reads GHVDHGKT. Position 19 to 26 (19 to 26) interacts with GTP; it reads GHVDHGKT. Mg(2+) is bound at residue threonine 26. A G2 region spans residues 60 to 64; sequence GITIN. The tract at residues 81-84 is G3; the sequence is DCPG. GTP is bound by residues 81–85 and 136–139; these read DCPGH and NKVD. Residues 136 to 139 are G4; that stretch reads NKVD. The interval 174-176 is G5; the sequence is SAT.

It belongs to the TRAFAC class translation factor GTPase superfamily. Classic translation factor GTPase family. EF-Tu/EF-1A subfamily. In terms of assembly, monomer.

The protein resides in the cytoplasm. The enzyme catalyses GTP + H2O = GDP + phosphate + H(+). Its function is as follows. GTP hydrolase that promotes the GTP-dependent binding of aminoacyl-tRNA to the A-site of ribosomes during protein biosynthesis. This chain is Elongation factor Tu, found in Terrimonas ferruginea (Flavobacterium ferrugineum).